We begin with the raw amino-acid sequence, 941 residues long: Isoleucine--tRNA ligase (941 aa).

The 'HIGH' region motif lies at 58 to 68 (PYANGDIHIGH). Glu563 provides a ligand contact to L-isoleucyl-5'-AMP. Positions 604-608 (KMSKS) match the 'KMSKS' region motif. Lys607 serves as a coordination point for ATP. Residues Cys904, Cys907, Cys924, and Cys927 each contribute to the Zn(2+) site.

The protein belongs to the class-I aminoacyl-tRNA synthetase family. IleS type 1 subfamily. Monomer. The cofactor is Zn(2+).

The protein localises to the cytoplasm. It carries out the reaction tRNA(Ile) + L-isoleucine + ATP = L-isoleucyl-tRNA(Ile) + AMP + diphosphate. In terms of biological role, catalyzes the attachment of isoleucine to tRNA(Ile). As IleRS can inadvertently accommodate and process structurally similar amino acids such as valine, to avoid such errors it has two additional distinct tRNA(Ile)-dependent editing activities. One activity is designated as 'pretransfer' editing and involves the hydrolysis of activated Val-AMP. The other activity is designated 'posttransfer' editing and involves deacylation of mischarged Val-tRNA(Ile). In Halorhodospira halophila (strain DSM 244 / SL1) (Ectothiorhodospira halophila (strain DSM 244 / SL1)), this protein is Isoleucine--tRNA ligase.